The following is a 181-amino-acid chain: Large ribosomal subunit protein uL5 (181 aa).

Belongs to the universal ribosomal protein uL5 family. Part of the 50S ribosomal subunit; contacts the 5S rRNA and probably tRNA. Forms a bridge to the 30S subunit in the 70S ribosome.

Its function is as follows. This is one of the proteins that bind and probably mediate the attachment of the 5S RNA into the large ribosomal subunit, where it forms part of the central protuberance. In the 70S ribosome it contacts protein S13 of the 30S subunit (bridge B1b), connecting the 2 subunits; this bridge is implicated in subunit movement. May contact the P site tRNA; the 5S rRNA and some of its associated proteins might help stabilize positioning of ribosome-bound tRNAs. In Methanococcus maripaludis (strain DSM 14266 / JCM 13030 / NBRC 101832 / S2 / LL), this protein is Large ribosomal subunit protein uL5.